Consider the following 77-residue polypeptide: Large ribosomal subunit protein bL28 (77 aa).

The protein belongs to the bacterial ribosomal protein bL28 family.

The chain is Large ribosomal subunit protein bL28 from Paracidovorax citrulli (strain AAC00-1) (Acidovorax citrulli).